The primary structure comprises 600 residues: Aspartate--tRNA(Asp/Asn) ligase (600 aa).

Residue glutamate 174 coordinates L-aspartate. An aspartate region spans residues 198–201 (QLFK). Arginine 220 contributes to the L-aspartate binding site. ATP is bound by residues 220–222 (RDE) and glutamine 229. Histidine 457 is an L-aspartate binding site. Glutamate 491 lines the ATP pocket. Arginine 498 contacts L-aspartate. Position 543-546 (543-546 (GLDR)) interacts with ATP.

The protein belongs to the class-II aminoacyl-tRNA synthetase family. Type 1 subfamily. In terms of assembly, homodimer.

It is found in the cytoplasm. The enzyme catalyses tRNA(Asx) + L-aspartate + ATP = L-aspartyl-tRNA(Asx) + AMP + diphosphate. Its function is as follows. Aspartyl-tRNA synthetase with relaxed tRNA specificity since it is able to aspartylate not only its cognate tRNA(Asp) but also tRNA(Asn). Reaction proceeds in two steps: L-aspartate is first activated by ATP to form Asp-AMP and then transferred to the acceptor end of tRNA(Asp/Asn). The protein is Aspartate--tRNA(Asp/Asn) ligase of Burkholderia ambifaria (strain ATCC BAA-244 / DSM 16087 / CCUG 44356 / LMG 19182 / AMMD) (Burkholderia cepacia (strain AMMD)).